The sequence spans 200 residues: Pyridoxal 5'-phosphate synthase subunit PdxT (200 aa).

52-54 (GES) is a binding site for L-glutamine. Cys84 (nucleophile) is an active-site residue. Residues Arg116 and 145–146 (IR) each bind L-glutamine. Residues His181 and Glu183 each act as charge relay system in the active site.

The protein belongs to the glutaminase PdxT/SNO family. In terms of assembly, in the presence of PdxS, forms a dodecamer of heterodimers. Only shows activity in the heterodimer.

The catalysed reaction is aldehydo-D-ribose 5-phosphate + D-glyceraldehyde 3-phosphate + L-glutamine = pyridoxal 5'-phosphate + L-glutamate + phosphate + 3 H2O + H(+). The enzyme catalyses L-glutamine + H2O = L-glutamate + NH4(+). Its pathway is cofactor biosynthesis; pyridoxal 5'-phosphate biosynthesis. Functionally, catalyzes the hydrolysis of glutamine to glutamate and ammonia as part of the biosynthesis of pyridoxal 5'-phosphate. The resulting ammonia molecule is channeled to the active site of PdxS. This chain is Pyridoxal 5'-phosphate synthase subunit PdxT, found in Saccharolobus islandicus (strain Y.N.15.51 / Yellowstone #2) (Sulfolobus islandicus).